Reading from the N-terminus, the 420-residue chain is ATP-dependent Clp protease ATP-binding subunit ClpX (420 aa).

Residues 4–57 (KTPGNNGKQKLFCSFCGKEQDAVKRLVAGPGVYICDECISLCNEIIAEDHEHSH) enclose the ClpX-type ZB domain. Residues cysteine 16, cysteine 19, cysteine 38, and cysteine 41 each contribute to the Zn(2+) site. 122-129 (PTGSGKTL) is an ATP binding site.

The protein belongs to the ClpX chaperone family. As to quaternary structure, component of the ClpX-ClpP complex. Forms a hexameric ring that, in the presence of ATP, binds to fourteen ClpP subunits assembled into a disk-like structure with a central cavity, resembling the structure of eukaryotic proteasomes.

ATP-dependent specificity component of the Clp protease. It directs the protease to specific substrates. Can perform chaperone functions in the absence of ClpP. The sequence is that of ATP-dependent Clp protease ATP-binding subunit ClpX from Leptospira interrogans serogroup Icterohaemorrhagiae serovar copenhageni (strain Fiocruz L1-130).